Consider the following 88-residue polypeptide: HssA/B-like protein 64 (88 aa).

Residues methionine 1–phenylalanine 24 show a composition bias toward low complexity. 2 disordered regions span residues methionine 1 to glycine 25 and glycine 45 to cysteine 88. The segment covering alanine 56–glycine 66 has biased composition (gly residues).

The protein belongs to the hssA/B family.

The sequence is that of HssA/B-like protein 64 (hssl64) from Dictyostelium discoideum (Social amoeba).